Here is a 207-residue protein sequence, read N- to C-terminus: Claudin-11 (207 aa).

Residue methionine 1 is a topological domain, cytoplasmic. A helical membrane pass occupies residues 2–22 (VATCLQVVGFVTSFVGWIGII). Residues 23–82 (VTTSTNDWVVTCSYTIPTCRKMDELGSKGLWADCVMATGLHHCKPLVDILILPGYAQACR) are Extracellular-facing. Residues 83–103 (ALMIAASVLGLPGILLLLTVL) traverse the membrane as a helical segment. The Cytoplasmic segment spans residues 104 to 122 (PCIRMGHEPGVAKYRRAQL). Residues 123-143 (AGVLLILLALCAIVATIWFPV) traverse the membrane as a helical segment. At 144–157 (CAHREITIVSFGYS) the chain is on the extracellular side. The chain crosses the membrane as a helical span at residues 158-178 (LYAGWIGAVMCLVGGCVIVCC). The Cytoplasmic portion of the chain corresponds to 179–207 (SGDAQSFGENRFYYSSGSSSPTHAKSAHV). Residues serine 193, serine 194, serine 197, and serine 198 each carry the phosphoserine modification.

This sequence belongs to the claudin family. Interacts with tetraspanin-3/TSPAN3. Interacts with OCLN.

It localises to the cell junction. Its subcellular location is the tight junction. The protein localises to the cell membrane. Its function is as follows. Plays a major role in tight junction-specific obliteration of the intercellular space, through calcium-independent cell-adhesion activity. This Rattus norvegicus (Rat) protein is Claudin-11 (Cldn11).